Consider the following 249-residue polypeptide: ATP synthase subunit a, chloroplastic (249 aa).

5 helical membrane passes run 40–60 (QVLI…VLAI), 97–117 (VPFI…GALL), 136–156 (INTT…AGLS), 201–221 (LVVV…VMFL), and 222–242 (GLFT…AYIG).

It belongs to the ATPase A chain family. F-type ATPases have 2 components, CF(1) - the catalytic core - and CF(0) - the membrane proton channel. CF(1) has five subunits: alpha(3), beta(3), gamma(1), delta(1), epsilon(1). CF(0) has four main subunits: a, b, b' and c.

The protein resides in the plastid. Its subcellular location is the chloroplast thylakoid membrane. Key component of the proton channel; it plays a direct role in the translocation of protons across the membrane. The polypeptide is ATP synthase subunit a, chloroplastic (Capsella bursa-pastoris (Shepherd's purse)).